A 155-amino-acid chain; its full sequence is Small ribosomal subunit protein uS7 (155 aa).

Belongs to the universal ribosomal protein uS7 family. Part of the 30S ribosomal subunit. Contacts proteins S9 and S11.

Its function is as follows. One of the primary rRNA binding proteins, it binds directly to 16S rRNA where it nucleates assembly of the head domain of the 30S subunit. Is located at the subunit interface close to the decoding center, probably blocks exit of the E-site tRNA. This Corynebacterium glutamicum (strain R) protein is Small ribosomal subunit protein uS7.